Here is a 185-residue protein sequence, read N- to C-terminus: Intraflagellar transport protein 22 homolog (185 aa).

GTP-binding positions include 10–17 (GPCESGKT), 63–67 (DCGGD), and 123–126 (HKPG).

Belongs to the small GTPase superfamily. Rab family. Component of the IFT complex B, at least composed of IFT20, IFT22, IFT25, IFT27, IFT46, IFT52, TRAF3IP1/IFT54, IFT57, IFT74, IFT80, IFT81, and IFT88. Interacts with IFT88. Interacts with CFAP61.

It localises to the cell projection. It is found in the cilium. Its function is as follows. Small GTPase-like component of the intraflagellar transport (IFT) complex B. The chain is Intraflagellar transport protein 22 homolog (IFT22) from Bos taurus (Bovine).